Reading from the N-terminus, the 55-residue chain is ATP synthase F(0) complex subunit 8 (55 aa).

The helical transmembrane segment at 4-24 threads the bilayer; the sequence is LLPTPWFTIFIYAWMVLLAVI.

Belongs to the ATPase protein 8 family. As to quaternary structure, component of the ATP synthase complex composed at least of ATP5F1A/subunit alpha, ATP5F1B/subunit beta, ATP5MC1/subunit c (homooctomer), MT-ATP6/subunit a, MT-ATP8/subunit 8, ATP5ME/subunit e, ATP5MF/subunit f, ATP5MG/subunit g, ATP5MK/subunit k, ATP5MJ/subunit j, ATP5F1C/subunit gamma, ATP5F1D/subunit delta, ATP5F1E/subunit epsilon, ATP5PF/subunit F6, ATP5PB/subunit b, ATP5PD/subunit d, ATP5PO/subunit OSCP. ATP synthase complex consists of a soluble F(1) head domain (subunits alpha(3) and beta(3)) - the catalytic core - and a membrane F(0) domain - the membrane proton channel (subunits c, a, 8, e, f, g, k and j). These two domains are linked by a central stalk (subunits gamma, delta, and epsilon) rotating inside the F1 region and a stationary peripheral stalk (subunits F6, b, d, and OSCP).

The protein resides in the mitochondrion membrane. In terms of biological role, subunit 8, of the mitochondrial membrane ATP synthase complex (F(1)F(0) ATP synthase or Complex V) that produces ATP from ADP in the presence of a proton gradient across the membrane which is generated by electron transport complexes of the respiratory chain. ATP synthase complex consist of a soluble F(1) head domain - the catalytic core - and a membrane F(1) domain - the membrane proton channel. These two domains are linked by a central stalk rotating inside the F(1) region and a stationary peripheral stalk. During catalysis, ATP synthesis in the catalytic domain of F(1) is coupled via a rotary mechanism of the central stalk subunits to proton translocation. In vivo, can only synthesize ATP although its ATP hydrolase activity can be activated artificially in vitro. Part of the complex F(0) domain. The polypeptide is ATP synthase F(0) complex subunit 8 (Dicentrarchus labrax (European seabass)).